The chain runs to 578 residues: MSSKKMVNSVEGCAGDALAGFVACNPDLQLLQGYRVALRSDLDSLKGRVALLSGGGSGHEPAHAGFIGKGMLTGVIAGAVFASPAVGSILAAIRAVAQAGTAGTLLIVKNYTGDRLNFGLAMEQAKAEGISVEMVVIEDDSAFTVLKKAGRRGLCGTILIHKVAGALAEEGMGLEEITKKVSVIAKAIGTLGVSLSPCSVPGTKPTFELAADEMELGLGIHGEAGVRRIKLVPVDQIVTLMLDHMTDTSNISHVPVKSGSSVVLMVNNLGGLSFLELGIIADAAIRLLEGRGVKVARALVGTFMSALEMRGVSLTLMLVDEPLLKLIDAETNAKAWPHMSKVSVTGRNRIRAAPTEPAEAPEATAAGGVASKQMTLVLDRISTTLIGLEEHLNALDRAAGDGDCGSTHSRAAKAIQGWLKEGPTPASPAQVLSKLSVLLLEKMGGSSGALYGLFLTAAAQPLKANTDLPAWSAAMDAGLKAMQKYGKAAPGDRTMLDSLWAAAQELQAWKSPGASLLPVLTKAVKSAEAAAEATKNMEAGAGRASYISSAQLDQPDPGAVAAAAIFRAILEVLQTKAA.

One can recognise a DhaK domain in the interval 9 to 336; sequence SVEGCAGDAL…IDAETNAKAW (328 aa). Residues 56 to 59, Lys109, and Asp114 each bind dihydroxyacetone; that span reads GSGH. Residue His221 is the Tele-hemiaminal-histidine intermediate of the active site. A DhaL domain is found at 372-571; sequence KQMTLVLDRI…AAAIFRAILE (200 aa). ATP-binding positions include 401 to 404, 446 to 447, Gly486, and 494 to 495; these read DGDC, SS, and TM. Ser511 and Ser545 each carry phosphoserine. 556-558 contributes to the ATP binding site; sequence DPG.

The protein belongs to the dihydroxyacetone kinase (DAK) family. As to quaternary structure, homodimer. Interacts with IFIH1 (via the CARD domains), the interaction is inhibited by viral infection. Mg(2+) is required as a cofactor. It depends on Mn(2+) as a cofactor. Co(2+) serves as cofactor.

The catalysed reaction is dihydroxyacetone + ATP = dihydroxyacetone phosphate + ADP + H(+). It catalyses the reaction D-glyceraldehyde + ATP = D-glyceraldehyde 3-phosphate + ADP + H(+). It carries out the reaction FAD = riboflavin cyclic-4',5'-phosphate + AMP + H(+). Its activity is regulated as follows. Each activity is inhibited by the substrate(s) of the other. In terms of biological role, catalyzes both the phosphorylation of dihydroxyacetone and of glyceraldehyde, and the splitting of ribonucleoside diphosphate-X compounds among which FAD is the best substrate. Represses IFIH1-mediated cellular antiviral response. The protein is Triokinase/FMN cyclase (Tkfc) of Rattus norvegicus (Rat).